We begin with the raw amino-acid sequence, 243 residues long: UPF0758 protein alr2351 (243 aa).

One can recognise an MPN domain in the interval Pro-113–Leu-235. Positions 184, 186, and 197 each coordinate Zn(2+). The JAMM motif motif lies at His-184–Asp-197.

Belongs to the UPF0758 family.

The protein is UPF0758 protein alr2351 of Nostoc sp. (strain PCC 7120 / SAG 25.82 / UTEX 2576).